An 86-amino-acid polypeptide reads, in one-letter code: MGIFDLLKKKQKPSTAAVAKERLQIIVAHERKKRTEPDYLPMMQQEIIQVIRKYVTIADDQVSVQLDNNDECSVLELNVTLPDSNS.

This sequence belongs to the MinE family.

In terms of biological role, prevents the cell division inhibition by proteins MinC and MinD at internal division sites while permitting inhibition at polar sites. This ensures cell division at the proper site by restricting the formation of a division septum at the midpoint of the long axis of the cell. The protein is Cell division topological specificity factor of Alteromonas mediterranea (strain DSM 17117 / CIP 110805 / LMG 28347 / Deep ecotype).